Consider the following 768-residue polypeptide: Solute carrier family 45 member 4 (768 aa).

The tract at residues 1–32 is disordered; the sequence is MKMAPQNADPESMQVQELSVPLPDPQKAGGAE. 6 helical membrane passes run 63 to 83, 86 to 106, 123 to 143, 155 to 175, 196 to 216, and 233 to 253; these read EFCY…IGLP, YYSL…PLIG, ILAL…GSAI, PIGI…ADAT, LNIH…LGGL, and VLFF…LFSI. Disordered regions lie at residues 259-284 and 379-419; these read SPQQ…PAFP and NEAK…RHAF. Ser424 and Ser454 each carry phosphoserine. The segment at 460-489 is disordered; sequence DMQKRQRQHRHRNQSGATTSSGDTESEEGE. Positions 473 to 482 are enriched in low complexity; that stretch reads QSGATTSSGD. Phosphoserine is present on Ser485. Transmembrane regions (helical) follow at residues 518–538, 560–580, 592–612, 614–634, 666–686, and 695–715; these read TWFS…QVIF, MGCW…ALLQ, VIYV…AMFP, VYVA…ISYC, ILSC…GGVV, and IPMV…FLVI. The interval 726 to 768 is disordered; the sequence is EQKGLSSPLAGEGRAGGNSEKPTVLKLTRKEGLQGPVETESVV. At Ser732 the chain carries Phosphoserine.

This sequence belongs to the glycoside-pentoside-hexuronide (GPH) cation symporter transporter (TC 2.A.2) family.

It is found in the membrane. The enzyme catalyses sucrose(out) + H(+)(out) = sucrose(in) + H(+)(in). Proton-associated sucrose transporter. May be able to transport also glucose and fructose. In Homo sapiens (Human), this protein is Solute carrier family 45 member 4.